A 260-amino-acid chain; its full sequence is Flap endonuclease Xni (260 aa).

D104 serves as a coordination point for Mg(2+). Residues 160–250 enclose the 5'-3' exonuclease domain; that stretch reads VSPQQLTDYW…NGNLQQLRLP (91 aa). K(+) is bound by residues L171, A172, P180, V182, and I185. The interaction with DNA stretch occupies residues 184–189; that stretch reads GIGPKS.

This sequence belongs to the Xni family. Requires Mg(2+) as cofactor. K(+) is required as a cofactor.

Functionally, has flap endonuclease activity. During DNA replication, flap endonucleases cleave the 5'-overhanging flap structure that is generated by displacement synthesis when DNA polymerase encounters the 5'-end of a downstream Okazaki fragment. The sequence is that of Flap endonuclease Xni from Pectobacterium atrosepticum (strain SCRI 1043 / ATCC BAA-672) (Erwinia carotovora subsp. atroseptica).